The following is a 1457-amino-acid chain: Receptor-type tyrosine-protein phosphatase kappa (1457 aa).

The N-terminal stretch at 1 to 25 (MDVAAAALPAFVALWLLYPWPLLGS) is a signal peptide. The Extracellular segment spans residues 26 to 752 (ALGQFSAGGC…PAKQTDRVVK (727 aa)). In terms of domain architecture, MAM spans 30–193 (FSAGGCTFDD…IQVLSYPCDK (164 aa)). N-linked (GlcNAc...) asparagine glycosylation is found at N100, N139, and N210. Residues 195-280 (PHFLRLGDVE…TQSERGSGVS (86 aa)) form the Ig-like C2-type domain. A disulfide bridge links C215 with C269. Fibronectin type-III domains lie at 293–388 (PIAP…CAEP), 391–487 (TPKT…TDED), 490–594 (GPVP…SAPS), and 595–688 (LPDY…TVGD). N-linked (GlcNAc...) asparagine glycans are attached at residues N415, N423, N435, N461, N551, N585, N589, N606, and N689. A helical transmembrane segment spans residues 753-774 (IAGISAGILVFILLLLVVIVIV). At 775–1457 (KKSKLAKKRK…DVALEYLESS (683 aa)) the chain is on the cytoplasmic side. Position 868 is a phosphoserine (S868). Tyrosine-protein phosphatase domains are found at residues 899–1159 (FKEE…ILEA) and 1191–1453 (LKDE…ALEY). Substrate-binding positions include D1068, 1100 to 1106 (CSAGAGR), and Q1144. C1100 acts as the Phosphocysteine intermediate in catalysis. The Phosphocysteine intermediate role is filled by C1394.

It belongs to the protein-tyrosine phosphatase family. Receptor class 2B subfamily. This protein undergoes proteolytic processing. As to expression, high levels in liver and kidney. Lower levels in lung, brain and heart. Not seen in spleen and testis.

The protein localises to the membrane. The catalysed reaction is O-phospho-L-tyrosyl-[protein] + H2O = L-tyrosyl-[protein] + phosphate. Regulation of processes involving cell contact and adhesion such as growth control, tumor invasion, and metastasis. Negative regulator of EGFR signaling pathway. Forms complexes with beta-catenin and gamma-catenin/plakoglobin. Beta-catenin may be a substrate for the catalytic activity of PTPRK/PTP-kappa. The protein is Receptor-type tyrosine-protein phosphatase kappa (Ptprk) of Mus musculus (Mouse).